The chain runs to 614 residues: Male-specific lethal 1 homolog (614 aa).

Disordered regions lie at residues 1-127 (MTMR…GCSP) and 147-217 (KEPT…GASS). Phosphoserine occurs at positions 66 and 126. Low complexity predominate over residues 158–169 (GAASPAATASDP). Residues 170 to 184 (AGPPPLPLPGPPPLA) are compositionally biased toward pro residues. The span at 185–194 (PTATAGTLAA) shows a compositional bias: low complexity. Residue S205 is modified to Phosphoserine. A coiled-coil region spans residues 213 to 282 (SGASSQAACL…KDNEKERHKL (70 aa)). The interaction with MSL2 stretch occupies residues 223–237 (KQILLLQLDLIEQQQ). Composition is skewed to basic and acidic residues over residues 272–281 (KKDNEKERHK) and 294–304 (TELSEKIKLEC). Residues 272–420 (KKDNEKERHK…PKEKAFSSEI (149 aa)) are disordered. Residue K301 forms a Glycyl lysine isopeptide (Lys-Gly) (interchain with G-Cter in SUMO2) linkage. The Nuclear localization signal signature appears at 317–346 (PKPFSCGRSGKGHKRKSPFGSTERKTPVKK). The residue at position 353 (K353) is an N6-acetyllysine. Residues K365 and K378 each participate in a glycyl lysine isopeptide (Lys-Gly) (interchain with G-Cter in SUMO2) cross-link. Positions 376–392 (VCKRELRSQETPEKPRS) are enriched in basic and acidic residues. S393 carries the phosphoserine modification. A compositionally biased stretch (polar residues) spans 393 to 407 (SVDTPPRLSTPQKGP). T396 carries the post-translational modification Phosphothreonine. S442 carries the phosphoserine modification. The 120-residue stretch at 472-591 (VLAVPSWRDH…LTPQNFELPW (120 aa)) folds into the PEHE domain. The segment at 496–514 (ENLDDSVFSKRHAKLELDE) is interaction with KAT8 HAT domain. The short motif at 505–519 (KRHAKLELDEKRRKR) is the Bipartite nuclear localization signal element. The interval 550-591 (EVTSFFPEPDDVESLMITPFLPVVAFGRPLPKLTPQNFELPW) is sufficient for interaction with MSL3 MRG domain.

The protein belongs to the msl-1 family. In terms of assembly, component of a multisubunit histone acetyltransferase complex (MSL) at least composed of the KAT8/MOF/MYST1, MSL1/hampin, MSL2 and MSL3. Forms a MSL heterotetrameric core with MSL2. Interacts (via PEHE domain) with KAT8 (via HAT domain) and MSL3 (via MRG domain); both interactions are direct. Directly interacts with NUPR1. Interacts with TP53BP1; this interaction may be required for MSL1 DNA repair activity, but not for histone acetyltransferase activity. Interacts with TTC4, ECM2 and PIHD1. In terms of processing, sumoylated with SUMO1.

The protein localises to the nucleus. The protein resides in the nucleoplasm. It localises to the nucleus speckle. Functionally, non-catalytic component of the MSL histone acetyltransferase complex, a multiprotein complex that mediates the majority of histone H4 acetylation at 'Lys-16' (H4K16ac), an epigenetic mark that prevents chromatin compaction. The MSL complex is required for chromosome stability and genome integrity by maintaining homeostatic levels of H4K16ac. The MSL complex is also involved in gene dosage by promoting up-regulation of genes expressed by the X chromosome. X up-regulation is required to compensate for autosomal biallelic expression. The MSL complex also participates in gene dosage compensation by promoting expression of Tsix non-coding RNA. Within the MSL complex, acts as a scaffold to tether MSL3 and KAT8 together for enzymatic activity regulation. Greatly enhances MSL2 E3 ubiquitin ligase activity, promoting monoubiquitination of histone H2B at 'Lys-34' (H2BK34Ub). This modification in turn stimulates histone H3 methylation at 'Lys-4' (H3K4me) and 'Lys-79' (H3K79me) and leads to gene activation, including that of HOXA9 and MEIS1. This chain is Male-specific lethal 1 homolog, found in Homo sapiens (Human).